The chain runs to 867 residues: Nuclear cap-binding protein subunit 1 (867 aa).

One can recognise an MIF4G domain in the interval 9–228 (LLRIGDRCPE…DLWERIQVLS (220 aa)). The interval 752–797 (SADGDVPNLRAGDPNVNSSARDPEATTMEIDNENGGDNDSQLNGQN) is disordered. Residues 788 to 797 (DNDSQLNGQN) show a composition bias toward polar residues.

This sequence belongs to the NCBP1 family. Component of the nuclear cap-binding complex (CBC), a heterodimer composed of ABH1/CBP80 and CBP20 that interacts with m7GpppG-capped RNA.

It is found in the nucleus. The protein resides in the cytoplasm. In terms of biological role, component of the cap-binding complex (CBC), which binds cotranscriptionally to the 5'-cap of pre-mRNAs and is involved in various processes such as pre-mRNA splicing and RNA-mediated gene silencing (RNAi) by microRNAs (miRNAs). The CBC complex is involved in miRNA-mediated RNA interference and is required for primary miRNA processing. In the CBC complex, ABH1/CBP80 does not bind directly capped RNAs (m7GpppG-capped RNA) but is required to stabilize the movement of the N-terminal loop of CBP20 and lock the CBC into a high affinity cap-binding state with the cap structure. This is Nuclear cap-binding protein subunit 1 (ABH1) from Oryza sativa subsp. japonica (Rice).